The chain runs to 427 residues: Cysteate synthase (427 aa).

N6-(pyridoxal phosphate)lysine is present on Lys104. Pyridoxal 5'-phosphate-binding residues include Asn130 and Thr382.

The protein belongs to the threonine synthase family. Cysteate synthase subfamily. Homotrimer. Pyridoxal 5'-phosphate serves as cofactor.

It carries out the reaction O-phospho-L-serine + sulfite + H(+) = L-cysteate + phosphate. It functions in the pathway cofactor biosynthesis; coenzyme M biosynthesis. Its function is as follows. Specifically catalyzes the beta-elimination of phosphate from L-phosphoserine and the beta-addition of sulfite to the dehydroalanine intermediate to produce L-cysteate. This chain is Cysteate synthase, found in Methanocella paludicola (strain DSM 17711 / JCM 13418 / NBRC 101707 / SANAE).